The chain runs to 374 residues: DNA replication and repair protein RecF (374 aa).

34–41 lines the ATP pocket; sequence GDNGAGKT.

The protein belongs to the RecF family.

It is found in the cytoplasm. Its function is as follows. The RecF protein is involved in DNA metabolism; it is required for DNA replication and normal SOS inducibility. RecF binds preferentially to single-stranded, linear DNA. It also seems to bind ATP. This Rhizobium johnstonii (strain DSM 114642 / LMG 32736 / 3841) (Rhizobium leguminosarum bv. viciae) protein is DNA replication and repair protein RecF.